We begin with the raw amino-acid sequence, 239 residues long: Uridylate kinase (239 aa).

Lys-12–Gly-15 is an ATP binding site. Residues Gly-20–Gly-25 are involved in allosteric activation by GTP. Gly-54 contributes to the UMP binding site. The ATP site is built by Gly-55 and Arg-59. UMP is bound by residues Asp-74 and Thr-135–Thr-142. Thr-162, Tyr-168, and Asp-171 together coordinate ATP.

It belongs to the UMP kinase family. Homohexamer.

The protein localises to the cytoplasm. It catalyses the reaction UMP + ATP = UDP + ADP. The protein operates within pyrimidine metabolism; CTP biosynthesis via de novo pathway; UDP from UMP (UMPK route): step 1/1. Its activity is regulated as follows. Allosterically activated by GTP. Inhibited by UTP. In terms of biological role, catalyzes the reversible phosphorylation of UMP to UDP. This Methylococcus capsulatus (strain ATCC 33009 / NCIMB 11132 / Bath) protein is Uridylate kinase.